Here is a 288-residue protein sequence, read N- to C-terminus: Bifunctional protein MdtA (288 aa).

Residues 129 to 132, 152 to 156, 195 to 198, and lysine 256 contribute to the NADP(+) site; these read TGPV, RKLDK, and TAGA.

In terms of assembly, homotrimer.

The protein resides in the cytoplasm. The enzyme catalyses 5,10-methylenetetrahydromethanopterin + NADP(+) = 5,10-methenyl-5,6,7,8-tetrahydromethanopterin + NADPH. It catalyses the reaction (6R)-5,10-methylene-5,6,7,8-tetrahydrofolate + NADP(+) = (6R)-5,10-methenyltetrahydrofolate + NADPH. The protein operates within one-carbon metabolism; formaldehyde degradation; formate from formaldehyde (H(4)MPT route): step 2/5. In terms of biological role, catalyzes the dehydrogenation of methylene-H(4)MPT. Can also catalyze the reversible dehydrogenation of methylene-H(4)F with 20-fold lower catalytic efficiency. The chain is Bifunctional protein MdtA from Methylorubrum extorquens (strain ATCC 14718 / DSM 1338 / JCM 2805 / NCIMB 9133 / AM1) (Methylobacterium extorquens).